Reading from the N-terminus, the 505-residue chain is Glycerol kinase 3 (505 aa).

Thr12 is an ADP binding site. ATP contacts are provided by Thr12, Thr13, and Ser14. Thr12 contributes to the sn-glycerol 3-phosphate binding site. Arg16 contributes to the ADP binding site. 4 residues coordinate sn-glycerol 3-phosphate: Arg82, Glu83, Tyr134, and Asp249. Glycerol-binding residues include Arg82, Glu83, Tyr134, Asp249, and Gln250. Residues Thr271 and Gly315 each coordinate ADP. ATP-binding residues include Thr271, Gly315, Gln319, and Gly416. ADP contacts are provided by Gly416 and Asn420.

This sequence belongs to the FGGY kinase family.

It catalyses the reaction glycerol + ATP = sn-glycerol 3-phosphate + ADP + H(+). It participates in polyol metabolism; glycerol degradation via glycerol kinase pathway; sn-glycerol 3-phosphate from glycerol: step 1/1. With respect to regulation, inhibited by fructose 1,6-bisphosphate (FBP). Key enzyme in the regulation of glycerol uptake and metabolism. Catalyzes the phosphorylation of glycerol to yield sn-glycerol 3-phosphate. This is Glycerol kinase 3 from Streptomyces avermitilis (strain ATCC 31267 / DSM 46492 / JCM 5070 / NBRC 14893 / NCIMB 12804 / NRRL 8165 / MA-4680).